A 196-amino-acid chain; its full sequence is DnaA initiator-associating protein DiaA (196 aa).

The region spanning 34–196 (LVQSLLNGNK…DNTLFPHQAD (163 aa)) is the SIS domain.

The protein belongs to the SIS family. DiaA subfamily. Homotetramer; dimer of dimers.

Functionally, required for the timely initiation of chromosomal replication via direct interactions with the DnaA initiator protein. This chain is DnaA initiator-associating protein DiaA, found in Edwardsiella ictaluri (strain 93-146).